The chain runs to 130 residues: Cholecystokinin (130 aa).

The first 20 residues, 1–20, serve as a signal peptide directing secretion; the sequence is MYGGICICVLLAALSVSSLG. Positions 21 to 48 are excised as a propeptide; that stretch reads QQPAGSHDGSPVAAELQQSLTEPHRHSR. The tract at residues 21–63 is disordered; it reads QQPAGSHDGSPVAAELQQSLTEPHRHSRAPSSAGPLKPAPRLD. A Sulfotyrosine modification is found at tyrosine 112. A Phenylalanine amide modification is found at phenylalanine 118. Positions 122-130 are excised as a propeptide; the sequence is SAEEYEYSS. Sulfotyrosine occurs at positions 126 and 128.

It belongs to the gastrin/cholecystokinin family. In terms of processing, the precursor is cleaved by proteases to produce a number of active cholecystokinins. As to expression, in the small intestine, the major production site is around the vitelline diverticulum.

It localises to the secreted. In terms of biological role, this peptide hormone induces gall bladder contraction and the release of pancreatic enzymes in the gut. Its function in the brain is not clear. It also decreases food intake and regulates gastrointestinal physiological processes. This Gallus gallus (Chicken) protein is Cholecystokinin (CCK).